The sequence spans 460 residues: Tyrosine-protein phosphatase non-receptor type 18 (460 aa).

The region spanning 26 to 291 (LAGEFSDIQA…RFLYHTVAQM (266 aa)) is the Tyrosine-protein phosphatase domain. Substrate is bound by residues D197, 229–235 (CSAGCGR), and Q276. Catalysis depends on C229, which acts as the Phosphocysteine intermediate. The tract at residues 361–460 (GAPAGAGSGT…RDPPAEWTRV (100 aa)) is disordered. Gly residues predominate over residues 364 to 378 (AGAGSGTQTGTGTGT). Phosphotyrosine is present on Y389. T393 carries the phosphothreonine modification. At Y426 the chain carries Phosphotyrosine. Residues 449 to 460 (GPRDPPAEWTRV) show a composition bias toward basic and acidic residues.

It belongs to the protein-tyrosine phosphatase family. Non-receptor class 4 subfamily. In terms of assembly, interacts with PSTPIP1. In terms of tissue distribution, expressed in brain, colon and several tumor-derived cell lines.

The protein localises to the nucleus. It localises to the cytoplasm. The catalysed reaction is O-phospho-L-tyrosyl-[protein] + H2O = L-tyrosyl-[protein] + phosphate. Functionally, differentially dephosphorylate autophosphorylated tyrosine kinases which are known to be overexpressed in tumor tissues. The chain is Tyrosine-protein phosphatase non-receptor type 18 (PTPN18) from Homo sapiens (Human).